The primary structure comprises 404 residues: Serine palmitoyltransferase (404 aa).

Residues 112-113 (GY), Ser-185, His-213, and Thr-241 contribute to the pyridoxal 5'-phosphate site. Lys-244 carries the post-translational modification N6-(pyridoxal phosphate)lysine.

Belongs to the class-II pyridoxal-phosphate-dependent aminotransferase family. Pyridoxal 5'-phosphate is required as a cofactor.

The protein localises to the cytoplasm. It carries out the reaction L-serine + hexadecanoyl-CoA + H(+) = 3-oxosphinganine + CO2 + CoA. It participates in lipid metabolism; sphingolipid metabolism. Its function is as follows. Involved in de novo bacterial ceramide synthesis. Catalyzes the condensation of L-serine with palmitoyl-CoA (hexadecanoyl-CoA) to produce 3-oxosphinganine. Can also condense serine and C16:1-CoA, but shows a preference for palmitoyl-CoA. In Caulobacter vibrioides (strain NA1000 / CB15N) (Caulobacter crescentus), this protein is Serine palmitoyltransferase.